The following is a 204-amino-acid chain: MILLQLSSAQGPEECCLAVRKALDRLIKEATRQDVAVTVLETETGRYSDTLRSALISLDGDNAWALSESWCGTIQWICPSPYRPHHGRKNWFLGIGRFTADEQEQSDAIRYETLRSSGPGGQHVNKTDSAVRATHLASGISVKVQSERSQHANKRLARLLIAWKLEQQQQENSAALKSQRRMFHHQIERGNPRRTFTGMAFIEG.

The segment at 2-98 (ILLQLSSAQG…KNWFLGIGRF (97 aa)) is rRNA-recognition domain, N-terminus. The interval 99 to 107 (TADEQEQSD) is linker 1. Residues 108–161 (AIRYETLRSSGPGGQHVNKTDSAVRATHLASGISVKVQSERSQHANKRLARLLI) are GGQ domain. The GGQ motif motif lies at 120–122 (GGQ). The interval 162 to 179 (AWKLEQQQQENSAALKSQ) is linker 2. The segment at 180 to 204 (RRMFHHQIERGNPRRTFTGMAFIEG) is rRNA-recognition domain, C-terminus.

It belongs to the prokaryotic/mitochondrial release factor family. Found in the A site of damaged 70S ribosomes, but not in undamaged ribosomes. Contacts (damaged) 16S rRNA, 23S rRNA and ribosomal protein uS12, but not mRNA.

Peptide chain release-like factor that acts on 70S ribosomes with specific damage to their decoding center (cleavage of 16S rRNA between adenine-1493 and guanosine-1494, E.coli 16S rRNA numbering). Probably acts as a peptidyl-tRNA hydrolase, allowing release of the nascent chain and dissociation of the 30S and 50S subunits. Can release mRNA as short as 19 nucleotides (nt, mRNA-19, which has a single amino acid in the P-site and only a single nt in the A-site) from the ribosome. This specific cleavage is inflicted by CdiA (ECL_04451) or by colicin E3-type (ColE3) proteins. In vivo the PrfH-RtcB2 pair restores growth in the presence of ribotoxins that specifically create this damage. This chain is Peptide chain release factor homolog, found in Escherichia coli (strain ATCC 25922 / DSM 1103 / LMG 8223 / NCIMB 12210 / NCTC 12241 / WDCM 00013 / Seattle 1946).